A 1349-amino-acid chain; its full sequence is Membrane-associated phosphatidylinositol transfer protein 2 (1349 aa).

The disordered stretch occupies residues 262 to 344 (EDGEEATELV…RDSDESSDDE (83 aa)). The span at 302–322 (KQWSTSSKSSRSSKRGASPSR) shows a compositional bias: low complexity. A phosphoserine mark is found at serine 337, serine 341, serine 368, and serine 589. Positions 618-631 (GGGGGSSGGGGSSG) are enriched in gly residues. Positions 618 to 671 (GGGGGSSGGGGSSGGSSLESSRHLSRSNVDIPRSNGTEDPKRQLPRKRSDSSTY) are disordered. The residue at position 644 (serine 644) is a Phosphoserine. Over residues 653–667 (GTEDPKRQLPRKRSD) the composition is skewed to basic and acidic residues. 3 positions are modified to phosphoserine: serine 700, serine 701, and serine 702. The DDHD domain occupies 715-963 (FDFEITDLFL…VSFLLRQVMR (249 aa)). Omega-N-methylarginine is present on arginine 828. The tract at residues 876–900 (LPAPSPTTPGPHPPARKASPGLERA) is disordered. A compositionally biased stretch (pro residues) spans 878–888 (APSPTTPGPHP). The residue at position 1277 (serine 1277) is a Phosphoserine. Residues 1296–1326 (TISAQPSGPSHRHERTQSQADGEQRGQRSMS) form a disordered region.

This sequence belongs to the PtdIns transfer protein family. PI transfer class IIA subfamily. As to quaternary structure, interacts with PTK2B via its C-terminus. Interacts with CPNE4 (via VWFA domain). In terms of tissue distribution, highly expressed in brain, heart, ovary, testis and thymus. Detected in small intestine, prostate, pancreas, skeletal muscle, liver, colon and placenta.

It localises to the endomembrane system. Catalyzes the transfer of phosphatidylinositol and phosphatidylcholine between membranes (in vitro). Binds calcium ions. The protein is Membrane-associated phosphatidylinositol transfer protein 2 (PITPNM2) of Homo sapiens (Human).